We begin with the raw amino-acid sequence, 428 residues long: Immunoglobulin superfamily containing leucine-rich repeat protein (428 aa).

Positions 1 to 18 (MQELRLLCLVVLVGLAQA) are cleaved as a signal peptide. An LRRNT domain is found at 19 to 50 (CPEPCECGEKYGFHIADCAYRDLQAVPSGFPA). N51 carries an N-linked (GlcNAc...) asparagine glycan. LRR repeat units follow at residues 51–72 (NVTTLSLSANQLPSLPGGAFRE), 75–96 (RLQSLWLAHNEIRSVAAGALAS), 99–122 (QLKSLDLSHNLISDFAWSDLHSLS), 123–144 (ALQLLKMDSNELTFIPRDAFRS), and 147–168 (ALRSLQLNHNRLHTLAEGTFAP). In terms of domain architecture, LRRCT spans 180-231 (NPFDCTCGIVWFKTWALTTAVSIPEQDNITCTSPHVLKGTRLNRLLPLPCSA). In terms of domain architecture, Ig-like spans 232 to 343 (PSVQLTYQPS…GSAESSVNVA (112 aa)). A disulfide bridge links C257 with C327. A glycan (N-linked (GlcNAc...) asparagine) is linked at N309.

The protein localises to the secreted. This chain is Immunoglobulin superfamily containing leucine-rich repeat protein (ISLR), found in Bos taurus (Bovine).